Reading from the N-terminus, the 519-residue chain is MEIMDSGEPFLQWDKNLSELSEAGENDILYSTHFTDLLDDLSQEALLGQLLSDPFLSGRGDAMDTEEELTRASPVPPHIQAEHSYSLCGDSRPQSPLSHLPGEPGSDAADSESDEWPMEQEDKGIKMEPLLCVPLPALTLTVTPAGSAPEPVIDSCDSAQSLSLPQVKEDSNSPQIKLEPHEVDQFLNLSPKGLECLQMPPTPPSSVGSDSEGSQSPVHPCAPASPTQTPAVLKVAPRAPSSLSSSPLLTAPHKLQGSGPLLLTEEEKRTLIAEGYPVPTKLPLSKAEEKALKKIRRKIKNKISAQESRRKKKEYVDALEKKVETCSNENHELRRKVENLECTNKSLLQQLHSLQAVVAGKVPRSCRVTGTQTSTCLMVVVLCFSLFLGSFYPGLSPCSSITKADLSREISIHDSYTTTVKSRSLLSIQEPGGLDEPHPIGLGGEYPEWDRQADVMAAWRFEQQHKEEEAELHKAEHRPLLLSTNETHAQKAILIDLHTHRSNETAKVIQLDRTVNETS.

Residues 1 to 374 are Cytoplasmic-facing; sequence MEIMDSGEPF…SCRVTGTQTS (374 aa). Disordered regions lie at residues 58–77, 85–121, and 193–261; these read GRGD…PVPP, YSLC…MEQE, and GLEC…SGPL. Residues 109 to 119 show a composition bias toward acidic residues; sequence ADSESDEWPME. 2 stretches are compositionally biased toward low complexity: residues 205 to 217 and 240 to 249; these read SSVG…SQSP and PSSLSSSPLL. One can recognise a bZIP domain in the interval 291-354; it reads ALKKIRRKIK…KSLLQQLHSL (64 aa). Positions 293–322 are basic motif; sequence KKIRRKIKNKISAQESRRKKKEYVDALEKK. Residues 333–354 form a leucine-zipper region; it reads LRRKVENLECTNKSLLQQLHSL. A helical; Signal-anchor for type II membrane protein transmembrane segment spans residues 375-395; that stretch reads TCLMVVVLCFSLFLGSFYPGL. Topologically, residues 396–519 are lumenal; that stretch reads SPCSSITKAD…QLDRTVNETS (124 aa). The short motif at 423 to 426 is the S1P recognition element; the sequence is RSLL. Residues Asn-485, Asn-503, and Asn-516 are each glycosylated (N-linked (GlcNAc...) asparagine).

The protein belongs to the bZIP family. ATF subfamily. In terms of assembly, binds DNA as a dimer. Post-translationally, upon ER stress, translocated to the Golgi apparatus, where it is processed by regulated intramembrane proteolysis (RIP) to release the cytosol-facing N-terminal transcription factor domain. The cleavage is performed sequentially by site-1 and site-2 proteases (S1P/mbtps1 and S2P/mbtps2).

It is found in the endoplasmic reticulum membrane. The protein localises to the nucleus. Its function is as follows. Transcription factor involved in unfolded protein response (UPR). In the absence of endoplasmic reticulum (ER) stress, inserted into ER membranes, with N-terminal DNA-binding and transcription activation domains oriented toward the cytosolic face of the membrane. In response to ER stress, transported to the Golgi, where it is cleaved in a site-specific manner by resident proteases S1P/mbtps1 and S2P/mbtps2. The released N-terminal cytosolic domain is translocated to the nucleus to effect transcription of specific target genes. Plays a critical role in chondrogenesis. May protect neuroblastoma cells from ER stress-induced death. In vitro activates transcription of target genes via direct binding to the CRE site. The protein is Cyclic AMP-responsive element-binding protein 3-like protein 2 (creb3l2) of Danio rerio (Zebrafish).